The primary structure comprises 32 residues: Calcitonin (32 aa).

A disulfide bridge connects residues cysteine 1 and cysteine 7. Proline amide is present on proline 32.

This sequence belongs to the calcitonin family.

The protein resides in the secreted. Causes a rapid but short-lived drop in the level of calcium and phosphate in blood by promoting the incorporation of those ions in the bones. The polypeptide is Calcitonin (Aquarana catesbeiana (American bullfrog)).